Here is a 932-residue protein sequence, read N- to C-terminus: Protein translocase subunit SecA (932 aa).

Residues Gln-87, 105 to 109 (GEGKT), and Asp-515 contribute to the ATP site. Cys-916, Cys-918, Cys-927, and His-928 together coordinate Zn(2+).

It belongs to the SecA family. In terms of assembly, monomer and homodimer. Part of the essential Sec protein translocation apparatus which comprises SecA, SecYEG and auxiliary proteins SecDF-YajC and YidC. Requires Zn(2+) as cofactor.

The protein resides in the cell inner membrane. The protein localises to the cytoplasm. The catalysed reaction is ATP + H2O + cellular proteinSide 1 = ADP + phosphate + cellular proteinSide 2.. In terms of biological role, part of the Sec protein translocase complex. Interacts with the SecYEG preprotein conducting channel. Has a central role in coupling the hydrolysis of ATP to the transfer of proteins into and across the cell membrane, serving both as a receptor for the preprotein-SecB complex and as an ATP-driven molecular motor driving the stepwise translocation of polypeptide chains across the membrane. This is Protein translocase subunit SecA from Burkholderia multivorans (strain ATCC 17616 / 249).